Here is a 181-residue protein sequence, read N- to C-terminus: MFGLKQFYQNEVRAKLAQELDIKNPMLLPKLEKIVISVGAGAHAKDMKIMQNIAQTISLVAGQKAVITKAKKSVAGFKIREGMAVGAKVTLRNKRMYNFLEKLIVISLPRVKDFRGISRNGFDGRGNYTFGINEQLIFPEVVYDDIMVSHGMNITMVTSTDNDKEAFKLLELLGLPFAKVR.

The protein belongs to the universal ribosomal protein uL5 family. As to quaternary structure, part of the 50S ribosomal subunit; part of the 5S rRNA/L5/L18/L25 subcomplex. Contacts the 5S rRNA and the P site tRNA. Forms a bridge to the 30S subunit in the 70S ribosome.

This is one of the proteins that bind and probably mediate the attachment of the 5S RNA into the large ribosomal subunit, where it forms part of the central protuberance. In the 70S ribosome it contacts protein S13 of the 30S subunit (bridge B1b), connecting the 2 subunits; this bridge is implicated in subunit movement. Contacts the P site tRNA; the 5S rRNA and some of its associated proteins might help stabilize positioning of ribosome-bound tRNAs. The chain is Large ribosomal subunit protein uL5 from Helicobacter pylori (strain J99 / ATCC 700824) (Campylobacter pylori J99).